The sequence spans 234 residues: Zein-alpha 19B1 (234 aa).

The signal sequence occupies residues 1-21 (MAAKIFCLLMLLGLSASAATA).

The protein belongs to the zein family.

Zeins are major seed storage proteins. In Zea mays (Maize), this protein is Zein-alpha 19B1.